The following is a 321-amino-acid chain: Inner membrane protein YtfF (321 aa).

Residues 1–4 (MISG) lie on the Cytoplasmic side of the membrane. The helical transmembrane segment at 5–25 (VLYALLAGLMWGLIFVGPLIV) threads the bilayer. An EamA domain is found at 13 to 141 (LMWGLIFVGP…IGIGLACVNI (129 aa)). The Periplasmic segment spans residues 26 to 30 (PEYPA). A helical transmembrane segment spans residues 31 to 51 (MLQSMGRYLALGLIALPIAWL). The Cytoplasmic portion of the chain corresponds to 52–65 (GRVRLRQLARRDWL). A helical membrane pass occupies residues 66–86 (TALMLTMMGNLIYYFCLASAI). The Periplasmic portion of the chain corresponds to 87-92 (QRTGAP). The helical transmembrane segment at 93 to 113 (VSTMIIGTLPVVIPVFANLLY) threads the bilayer. The Cytoplasmic portion of the chain corresponds to 114 to 120 (SQRDGKL). A helical transmembrane segment spans residues 121–141 (AWGKLAPALICIGIGLACVNI). Residues 142 to 154 (AELNHGLPDFDWA) lie on the Periplasmic side of the membrane. Residues 155–175 (RYTSGIVLALVSVVCWAWYAL) form a helical membrane-spanning segment. At 176–194 (RNARWLRENPDKHPMMWAT) the chain is on the cytoplasmic side. The chain crosses the membrane as a helical span at residues 195–215 (AQALVTLPVSLIGYLVACYWL). The Periplasmic segment spans residues 216–230 (NTQTPDFSLPFGPRP). Residues 231–251 (LVFISLMVAIAVLCSWVGALC) traverse the membrane as a helical segment. The Cytoplasmic portion of the chain corresponds to 252–261 (WNVASQLLPT). The chain crosses the membrane as a helical span at residues 262–282 (VILGPLIVFETLAGLLYTFLL). Residues 283 to 285 (RQQ) lie on the Periplasmic side of the membrane. Residues 286–306 (MPPLMTLSGIALLVIGVVIAV) traverse the membrane as a helical segment. At 307–321 (RAKPEKPLTESVSES) the chain is on the cytoplasmic side.

The protein localises to the cell inner membrane. The chain is Inner membrane protein YtfF (ytfF) from Escherichia coli (strain K12).